A 449-amino-acid chain; its full sequence is Type 3 secretion system ATPase (449 aa).

Residue 178-183 participates in ATP binding; sequence GCGKTT.

It belongs to the ATPase alpha/beta chains family. T3SS ATPase subfamily. As to quaternary structure, the core secretion machinery of the T3SS is composed of approximately 20 different proteins, including cytoplasmic components, a base, an export apparatus and a needle. This subunit is part of the cytosolic complex. Forms homododecamers.

It localises to the cytoplasm. It catalyses the reaction ATP + H2O + cellular proteinSide 1 = ADP + phosphate + cellular proteinSide 2.. ATPase component of the type III secretion system (T3SS), also called injectisome, which is used to inject bacterial effector proteins into eukaryotic host cells. Acts as a molecular motor to provide the energy that is required for the export of proteins. Required for type III secretion apparatus (T3SA) formation, proper protein secretion, host cell invasion and virulence. May play a critical role in T3SS substrate recognition, disassembly of the effector/chaperone complex and unfolding of the effector in an ATP-dependent manner prior to secretion. This Pseudomonas syringae pv. tomato (strain ATCC BAA-871 / DC3000) protein is Type 3 secretion system ATPase.